The chain runs to 469 residues: Argininosuccinate lyase (469 aa).

Belongs to the lyase 1 family. Argininosuccinate lyase subfamily.

The protein resides in the cytoplasm. The catalysed reaction is 2-(N(omega)-L-arginino)succinate = fumarate + L-arginine. The protein operates within amino-acid biosynthesis; L-arginine biosynthesis; L-arginine from L-ornithine and carbamoyl phosphate: step 3/3. In Burkholderia lata (strain ATCC 17760 / DSM 23089 / LMG 22485 / NCIMB 9086 / R18194 / 383), this protein is Argininosuccinate lyase.